Reading from the N-terminus, the 79-residue chain is Large ribosomal subunit protein bL31 (79 aa).

Belongs to the bacterial ribosomal protein bL31 family. Type A subfamily. In terms of assembly, part of the 50S ribosomal subunit.

Functionally, binds the 23S rRNA. In Rickettsia bellii (strain RML369-C), this protein is Large ribosomal subunit protein bL31 (rpmE).